Reading from the N-terminus, the 103-residue chain is Small ribosomal subunit protein uS10 (103 aa).

The protein belongs to the universal ribosomal protein uS10 family. Part of the 30S ribosomal subunit.

Its function is as follows. Involved in the binding of tRNA to the ribosomes. This is Small ribosomal subunit protein uS10 from Neisseria gonorrhoeae (strain NCCP11945).